We begin with the raw amino-acid sequence, 325 residues long: Peroxidase 45 (325 aa).

A signal peptide spans 1–25 (MEKNTSQTIFSNFFLLLLLSSCVSA). 4 cysteine pairs are disulfide-bonded: C36/C115, C69/C74, C121/C321, and C200/C232. The Proton acceptor role is filled by H67. Ca(2+) contacts are provided by D68, V71, G73, D75, and S77. P163 is a binding site for substrate. H193 serves as a coordination point for heme b. T194 contributes to the Ca(2+) binding site. 3 residues coordinate Ca(2+): D245, S248, and D253.

It belongs to the peroxidase family. Classical plant (class III) peroxidase subfamily. Heme b is required as a cofactor. It depends on Ca(2+) as a cofactor. Slightly expressed in roots.

The protein localises to the secreted. It catalyses the reaction 2 a phenolic donor + H2O2 = 2 a phenolic radical donor + 2 H2O. In terms of biological role, removal of H(2)O(2), oxidation of toxic reductants, biosynthesis and degradation of lignin, suberization, auxin catabolism, response to environmental stresses such as wounding, pathogen attack and oxidative stress. These functions might be dependent on each isozyme/isoform in each plant tissue. The protein is Peroxidase 45 (PER45) of Arabidopsis thaliana (Mouse-ear cress).